Consider the following 377-residue polypeptide: Secreted LysM effector Lys2 (377 aa).

Residues 1-22 form the signal peptide; the sequence is MVRQSIGLIALQLLNLVSVAQA. Residues 104–119 are compositionally biased toward low complexity; that stretch reads TSSSTATTTSQKPTAT. Residues 104–124 form a disordered region; it reads TSSSTATTTSQKPTATVSPLP. 2 consecutive LysM domains span residues 135–182 and 207–253; these read KYYN…YVCV and KYYK…YYCV.

The protein belongs to the secreted LysM effector family.

In terms of biological role, might have a role in sequestration of chitin oligosaccharides (breakdown products of fungal cell walls that are released during invasion and act as triggers of host immunity) to dampen host defense. The polypeptide is Secreted LysM effector Lys2 (Pochonia chlamydosporia (strain 123) (Metacordyceps chlamydosporia)).